We begin with the raw amino-acid sequence, 576 residues long: MEVPIAAMTFAHPANVMTLASRQPKSKRSHISPATTAHRNLQTRLAHHHHATPASLPMAICNTVDKVINRFIDLPEQRPTVDPRRVLSGNFAPVDELPPTSCHVIRGSIPSCLAGGVYIRNGPNPQHRLPQRTHHLFDGDGMLHSLLIPSASSTLLSEPVLCSRYVHTYKYLLERETGGPVLPNFFAGFHGVAGLARAVVMIARVLAGQINLNKGFGLANTSITLFADCLYALCESDLPYSMHINPANGEVTTLGRCDFGGDLSFRMTAHPKKDPVTMELFAFRYNVFQPFITYFWFDRAGSKVADVPILSLQKPSVMHDFAITERYAIFPESQLIVNPMDMVMRGSSLVGLDRTMVPRIGVLPRYAKDESDMRWFEVPRFNMLHTTNGWEEADGEEIVLVAPNILSIEHMLGNMELMRARVDMVRINLCTGDVSCTALSPESLEFGVIHQGYVGRKNRYGYFGVSGPLPKIKGIRKLDFDLVGSGDCTVGRRDFGLGCFAGEPFFVPDNIDGYGNEDSGYVVCYTHEEDTGESWFVVMDAKSPELDIVAEVQLPSRIPYGFHGIFVKQAELLAQQ.

The transit peptide at 1 to 34 (MEVPIAAMTFAHPANVMTLASRQPKSKRSHISPA) directs the protein to the chloroplast. Histidine 270, histidine 319, histidine 385, and histidine 563 together coordinate Fe cation.

This sequence belongs to the carotenoid oxygenase family. The cofactor is Fe(2+).

It is found in the plastid. The protein resides in the chloroplast. The catalysed reaction is a 9-cis-epoxycarotenoid + O2 = a 12'-apo-carotenal + 2-cis,4-trans-xanthoxin. It catalyses the reaction 9-cis-violaxanthin + O2 = (3S,5R,6S)-5,6-epoxy-3-hydroxy-5,6-dihydro-12'-apo-beta-caroten-12'-al + 2-cis,4-trans-xanthoxin. It carries out the reaction 9'-cis-neoxanthin + O2 = (3S,5R,6R)-3,5-dihydroxy-6,7-didehydro-5,6-dihydro-12'-apo-beta-caroten-12'-al + 2-cis,4-trans-xanthoxin. Its function is as follows. Has a 11,12(11',12') 9-cis epoxycarotenoid cleavage activity. Catalyzes the first step of abscisic-acid biosynthesis from carotenoids. In Oryza sativa subsp. japonica (Rice), this protein is 9-cis-epoxycarotenoid dioxygenase NCED2, chloroplastic.